Reading from the N-terminus, the 274-residue chain is Large ribosomal subunit protein uL2 (274 aa).

The interval 224 to 274 is disordered; it reads VAMNPVDHPHGGGEGRTSGGRHPVTPWGIPTKGYKTRRNKRSNKLIVQKRK. Basic residues predominate over residues 257-274; sequence YKTRRNKRSNKLIVQKRK.

This sequence belongs to the universal ribosomal protein uL2 family. In terms of assembly, part of the 50S ribosomal subunit. Forms a bridge to the 30S subunit in the 70S ribosome.

In terms of biological role, one of the primary rRNA binding proteins. Required for association of the 30S and 50S subunits to form the 70S ribosome, for tRNA binding and peptide bond formation. It has been suggested to have peptidyltransferase activity; this is somewhat controversial. Makes several contacts with the 16S rRNA in the 70S ribosome. The protein is Large ribosomal subunit protein uL2 of Francisella tularensis subsp. holarctica (strain FTNF002-00 / FTA).